Reading from the N-terminus, the 623-residue chain is Xaa-Pro aminopeptidase 1 (623 aa).

Arginine 77 lines the a peptide pocket. Residue lysine 304 is modified to N6-acetyllysine. An a peptide-binding site is contributed by histidine 395. Residues aspartate 415, aspartate 426, and histidine 489 each contribute to the Mn(2+) site. The a peptide site is built by histidine 489, histidine 498, and glutamate 523. Mn(2+) contacts are provided by glutamate 523 and glutamate 537.

This sequence belongs to the peptidase M24B family. As to quaternary structure, homodimer. Mn(2+) serves as cofactor. As to expression, expressed in all tissues tested, including liver, adrenal decapsular tissue, adrenal capsular tissue, corpus luteum, testis, submandibular gland, thymus, brain, cerebellum and heart. Highest levels in testis.

Its subcellular location is the cytoplasm. The enzyme catalyses Release of any N-terminal amino acid, including proline, that is linked to proline, even from a dipeptide or tripeptide.. Inhibited by inositol hexakisphosphate. Functionally, metalloaminopeptidase that catalyzes the removal of a penultimate prolyl residue from the N-termini of peptides, such as Arg-Pro-Pro. Contributes to the degradation of bradykinin. This Rattus norvegicus (Rat) protein is Xaa-Pro aminopeptidase 1.